We begin with the raw amino-acid sequence, 1024 residues long: Probable serine/threonine-protein kinase DDB_G0271682 (1024 aa).

A disordered region spans residues 187–261 (NIDNNNNNNN…RDNENNHNHQ (75 aa)). Residues 190-244 (NNNNNNNNNNNNNNNNNNNNNNNNNNNNNNNNNNNNNNNNNNNNNNNNNNNNNNN) show a composition bias toward low complexity. Positions 250–261 (RSRDNENNHNHQ) are enriched in basic and acidic residues. 2 Protein kinase domains span residues 360 to 609 (LLFI…LKLM) and 645 to 1018 (ILVT…ELLI). ATP-binding positions include 366 to 374 (IGSGACGEV) and lysine 387. Aspartate 484 acts as the Proton acceptor in catalysis. ATP-binding positions include 651 to 659 (VGGNVSGNV) and lysine 719. 2 stretches are compositionally biased toward low complexity: residues 823 to 851 (NNNSNQNNNNNNNNNNNNNNNNNNNNNNN) and 862 to 874 (ENTNTTTTTTTTT). Residues 823–874 (NNNSNQNNNNNNNNNNNNNNNNNNNNNNNKKNDGGDDNGENTNTTTTTTTTT) form a disordered region.

This sequence belongs to the protein kinase superfamily. TKL Ser/Thr protein kinase family.

It carries out the reaction L-seryl-[protein] + ATP = O-phospho-L-seryl-[protein] + ADP + H(+). The catalysed reaction is L-threonyl-[protein] + ATP = O-phospho-L-threonyl-[protein] + ADP + H(+). This chain is Probable serine/threonine-protein kinase DDB_G0271682, found in Dictyostelium discoideum (Social amoeba).